We begin with the raw amino-acid sequence, 324 residues long: Methionyl-tRNA formyltransferase (324 aa).

109-112 (SLLP) lines the (6S)-5,6,7,8-tetrahydrofolate pocket. The disordered stretch occupies residues 305 to 324 (LHPGESFHKATQDNQGASET).

This sequence belongs to the Fmt family.

It catalyses the reaction L-methionyl-tRNA(fMet) + (6R)-10-formyltetrahydrofolate = N-formyl-L-methionyl-tRNA(fMet) + (6S)-5,6,7,8-tetrahydrofolate + H(+). Functionally, attaches a formyl group to the free amino group of methionyl-tRNA(fMet). The formyl group appears to play a dual role in the initiator identity of N-formylmethionyl-tRNA by promoting its recognition by IF2 and preventing the misappropriation of this tRNA by the elongation apparatus. The polypeptide is Methionyl-tRNA formyltransferase (Nitrosomonas europaea (strain ATCC 19718 / CIP 103999 / KCTC 2705 / NBRC 14298)).